We begin with the raw amino-acid sequence, 533 residues long: MAPKRKASVQTEGSKKRRQGTEEEDSFRSTAEALRAAPADNRVIRVDPSCPFSRNPGIQVHEDYDCTLNQTNIGNNNNKFYIIQLLEEGSRFFCWNRWGRVGEVGQSKMNHFTCLEDAKKDFKKKFWEKTKNKWEERDRFVAQPNKYTLIEVQGEAESQEAVVKALSPQVYSGPVRTVVKPCSLDPATQNLITNIFSKEMFKNAMTLMNLDVKKMPLGKLTKQQIARGFEALEALEEAMKNPTGDGQSLEELSSCFYTVIPHNFGRSRPPPINSPDVLQAKKDMLLVLADIELAQTLQAAPGEEEEKVEEVPHPLDRDYQLLRCQLQLLDSGESEYKAIQTYLKQTGNSYRCPDLRHVWKVNREGEGDRFQAHSKLGNRRLLWHGTNVAVVAAILTSGLRIMPHSGGRVGKGIYFASENSKSAGYVTTMHCGGHQVGYMFLGEVALGKEHHITIDDPSLKSPPSGFDSVIARGQTEPDPAQDIELELDGQPVVVPQGPPVQCPSFKSSSFSQSEYLIYKESQCRLRYLLEIHL.

Residues 1–30 (MAPKRKASVQTEGSKKRRQGTEEEDSFRST) form a disordered region. At Lys-6 the chain carries N6-(ADP-ribosyl)lysine. An ADP-ribosyl glutamic acid modification is found at Glu-12. Residues 14-18 (SKKRR) carry the Nuclear localization signal motif. ADP-ribosyl glutamic acid is present on residues Glu-24 and Glu-32. The WGR domain occupies 57-147 (GIQVHEDYDC…DRFVAQPNKY (91 aa)). Asp-138 is modified (ADP-ribosyl aspartic acid). ADP-ribosyl glutamic acid occurs at positions 160, 230, 309, and 310. Residues 181 to 299 (PCSLDPATQN…DIELAQTLQA (119 aa)) form the PARP alpha-helical domain. In terms of domain architecture, PARP catalytic spans 313–533 (HPLDRDYQLL…RLRYLLEIHL (221 aa)).

It belongs to the ARTD/PARP family. In terms of assembly, interacts with PARP1; leading to activate PARP1 in absence of DNA. Interacts with PRKDC. Interacts with XRCC5/Ku80; the interaction is dependent on nucleic acids. Interacts with XRCC6/Ku70; the interaction is dependent on nucleic acids. Interacts with EZH2, HDAC1, HDAC2, SUZ12, YY1, LRIG3 and LIG4. In terms of processing, auto-ADP-ribosylated.

The protein resides in the nucleus. The protein localises to the chromosome. It is found in the cytoplasm. Its subcellular location is the cytoskeleton. It localises to the microtubule organizing center. The protein resides in the centrosome. The protein localises to the centriole. The enzyme catalyses L-aspartyl-[protein] + NAD(+) = 4-O-(ADP-D-ribosyl)-L-aspartyl-[protein] + nicotinamide. It catalyses the reaction L-glutamyl-[protein] + NAD(+) = 5-O-(ADP-D-ribosyl)-L-glutamyl-[protein] + nicotinamide. The catalysed reaction is L-lysyl-[protein] + NAD(+) = N(6)-(ADP-D-ribosyl)-L-lysyl-[protein] + nicotinamide + H(+). Its function is as follows. Mono-ADP-ribosyltransferase that mediates mono-ADP-ribosylation of target proteins and plays a key role in the response to DNA damage. Mediates mono-ADP-ribosylation of glutamate, aspartate or lysine residues on target proteins. In contrast to PARP1 and PARP2, it is not able to mediate poly-ADP-ribosylation. Involved in DNA repair by mediating mono-ADP-ribosylation of a limited number of acceptor proteins involved in chromatin architecture and in DNA metabolism, such as histone H2B, XRCC5 and XRCC6. ADP-ribosylation follows DNA damage and appears as an obligatory step in a detection/signaling pathway leading to the reparation of DNA strand breaks. Involved in single-strand break repair by catalyzing mono-ADP-ribosylation of histone H2B on 'Glu-2' (H2BE2ADPr) of nucleosomes containing nicked DNA. Cooperates with the XRCC5-XRCC6 (Ku80-Ku70) heterodimer to limit end-resection thereby promoting accurate NHEJ. Suppresses G-quadruplex (G4) structures in response to DNA damage. Associates with a number of DNA repair factors and is involved in the response to exogenous and endogenous DNA strand breaks. Together with APLF, promotes the retention of the LIG4-XRCC4 complex on chromatin and accelerate DNA ligation during non-homologous end-joining (NHEJ). May link the DNA damage surveillance network to the mitotic fidelity checkpoint. Acts as a negative regulator of immunoglobulin class switch recombination, probably by controlling the level of AICDA /AID on the chromatin. In addition to proteins, also able to ADP-ribosylate DNA: mediates DNA mono-ADP-ribosylation of DNA strand break termini via covalent addition of a single ADP-ribose moiety to a 5'- or 3'-terminal phosphate residues in DNA containing multiple strand breaks. This is Protein mono-ADP-ribosyltransferase PARP3 from Mus musculus (Mouse).